The chain runs to 305 residues: Putative lipid kinase SAS0691 (305 aa).

A DAGKc domain is found at 3–139 (NKYTHGVLFY…YDVIKINNQY (137 aa)). ATP contacts are provided by residues serine 44, 74 to 80 (GDGTVNE), and threonine 101. Mg(2+)-binding residues include serine 220, aspartate 223, and glutamate 225. Glutamate 281 acts as the Proton acceptor in catalysis.

This sequence belongs to the diacylglycerol/lipid kinase family. It depends on Mg(2+) as a cofactor.

May catalyze the ATP-dependent phosphorylation of lipids other than diacylglycerol (DAG). This Staphylococcus aureus (strain MSSA476) protein is Putative lipid kinase SAS0691.